Consider the following 1009-residue polypeptide: Protein naked cuticle (1009 aa).

Polar residues-rich tracts occupy residues 68–83 (IITT…ASNK) and 121–130 (LPQDMSSSGS). Residues 68 to 166 (IITTPPGNAS…QQQTAAAATG (99 aa)) form a disordered region. Residues 152 to 166 (QQQQQQQQTAAAATG) show a composition bias toward low complexity. Residues 206 to 282 (EFTCDVSVEG…TVSPEGKSKS (77 aa)) are interaction with dsh. An EF-hand domain is found at 217-253 (KSSQPLQFSFTFYDLDGHHGKITKDDIVGIVYTIYES). Disordered regions lie at residues 328–433 (MSKQ…QQQL), 456–479 (AGNE…RQQD), and 515–580 (GNDS…QQQR). Basic residues predominate over residues 349 to 359 (RRQHRYRPRKL). The span at 370–387 (NSEKEKERERERERESHA) shows a compositional bias: basic and acidic residues. A compositionally biased stretch (basic residues) spans 403 to 414 (KSHHHHHHHGRY). The span at 515–525 (GNDSGNWQNRH) shows a compositional bias: polar residues. Low complexity-rich tracts occupy residues 526–535 (LQQSLQQQPQ) and 570–580 (HQQLQQQQQQR). Positions 584–613 (ECWKSALNRNDLISIIRESMEKNRLCFQLN) are required for nuclear localization and inhibition of Wnt signaling. Disordered stretches follow at residues 619–662 (NVSP…SPLS), 773–799 (SAAH…HNQK), 835–899 (LQQK…SAGS), and 955–982 (TESG…LDTS). Low complexity-rich tracts occupy residues 624 to 638 (RQPA…QRQR) and 653 to 662 (SPAAPQSPLS). A compositionally biased stretch (basic residues) spans 843-857 (RRHRHKQQQQQHHHQ). Over residues 858-875 (QQQQQQQQQNQQQQQQQQ) the composition is skewed to low complexity. Over residues 968–979 (EADEGQEQEVEL) the composition is skewed to acidic residues.

It belongs to the NKD family. Interacts with dsh.

The protein localises to the cell membrane. Its subcellular location is the cytoplasm. The protein resides in the nucleus. Cell autonomous antagonist of the canonical Wnt signaling pathway. May activate a second Wnt signaling pathway that controls planar cell polarity. Required for neuroblast specification. In Drosophila pseudoobscura pseudoobscura (Fruit fly), this protein is Protein naked cuticle.